Here is a 184-residue protein sequence, read N- to C-terminus: UPF0301 protein Rsph17029_2659 (184 aa).

This sequence belongs to the UPF0301 (AlgH) family.

The polypeptide is UPF0301 protein Rsph17029_2659 (Cereibacter sphaeroides (strain ATCC 17029 / ATH 2.4.9) (Rhodobacter sphaeroides)).